Reading from the N-terminus, the 172-residue chain is SsrA-binding protein (172 aa).

The protein belongs to the SmpB family.

It is found in the cytoplasm. Required for rescue of stalled ribosomes mediated by trans-translation. Binds to transfer-messenger RNA (tmRNA), required for stable association of tmRNA with ribosomes. tmRNA and SmpB together mimic tRNA shape, replacing the anticodon stem-loop with SmpB. tmRNA is encoded by the ssrA gene; the 2 termini fold to resemble tRNA(Ala) and it encodes a 'tag peptide', a short internal open reading frame. During trans-translation Ala-aminoacylated tmRNA acts like a tRNA, entering the A-site of stalled ribosomes, displacing the stalled mRNA. The ribosome then switches to translate the ORF on the tmRNA; the nascent peptide is terminated with the 'tag peptide' encoded by the tmRNA and targeted for degradation. The ribosome is freed to recommence translation, which seems to be the essential function of trans-translation. This chain is SsrA-binding protein, found in Dehalococcoides mccartyi (strain ATCC BAA-2100 / JCM 16839 / KCTC 5957 / BAV1).